Here is a 527-residue protein sequence, read N- to C-terminus: AAA ATPase forming ring-shaped complexes (527 aa).

The span at 1–18 (MVTMSSPTDSSPSNSFSD) shows a compositional bias: low complexity. Positions 1–38 (MVTMSSPTDSSPSNSFSDFNREEQSRLSDEVRQLKRTN) are disordered. Residues 19-33 (FNREEQSRLSDEVRQ) are compositionally biased toward basic and acidic residues. Residues 21-53 (REEQSRLSDEVRQLKRTNSDLGARNAKLAEMLK) adopt a coiled-coil conformation. An ATP-binding site is contributed by 257 to 262 (GCGKTL). Residues 492–515 (DENQQSEDLPNTSNPDEWSRITGR) are disordered. Positions 497-507 (SEDLPNTSNPD) are enriched in polar residues.

This sequence belongs to the AAA ATPase family. As to quaternary structure, homohexamer. Assembles into a hexameric ring structure.

The chain is AAA ATPase forming ring-shaped complexes from Corynebacterium glutamicum (strain R).